The sequence spans 317 residues: Sulfate adenylyltransferase subunit 2 (317 aa).

Disordered regions lie at residues 1-21 (MPDS…APLD) and 298-317 (RAID…EGYF).

This sequence belongs to the PAPS reductase family. CysD subfamily. As to quaternary structure, heterodimer composed of CysD, the smaller subunit, and CysN.

It catalyses the reaction sulfate + ATP + H(+) = adenosine 5'-phosphosulfate + diphosphate. The protein operates within sulfur metabolism; hydrogen sulfide biosynthesis; sulfite from sulfate: step 1/3. Its function is as follows. With CysN forms the ATP sulfurylase (ATPS) that catalyzes the adenylation of sulfate producing adenosine 5'-phosphosulfate (APS) and diphosphate, the first enzymatic step in sulfur assimilation pathway. APS synthesis involves the formation of a high-energy phosphoric-sulfuric acid anhydride bond driven by GTP hydrolysis by CysN coupled to ATP hydrolysis by CysD. The protein is Sulfate adenylyltransferase subunit 2 of Rhizobium etli (strain ATCC 51251 / DSM 11541 / JCM 21823 / NBRC 15573 / CFN 42).